We begin with the raw amino-acid sequence, 112 residues long: UPF0102 protein CFF8240_0294 (112 aa).

This sequence belongs to the UPF0102 family.

This chain is UPF0102 protein CFF8240_0294, found in Campylobacter fetus subsp. fetus (strain 82-40).